The sequence spans 398 residues: Phosphoglycerate kinase (398 aa).

Substrate contacts are provided by residues 23-25 (DLN), Arg38, 61-64 (HFGR), Arg119, and Arg152. ATP-binding positions include Lys202, Glu324, and 354-357 (GGDT).

It belongs to the phosphoglycerate kinase family. As to quaternary structure, monomer.

It localises to the cytoplasm. The catalysed reaction is (2R)-3-phosphoglycerate + ATP = (2R)-3-phospho-glyceroyl phosphate + ADP. It participates in carbohydrate degradation; glycolysis; pyruvate from D-glyceraldehyde 3-phosphate: step 2/5. The chain is Phosphoglycerate kinase from Rhodopseudomonas palustris (strain ATCC BAA-98 / CGA009).